The primary structure comprises 289 residues: MAETTASGYIQHHLQNLTFGQLPNGGWGFAHSAAEAKEMGFWAFHLDTLGWSVALGLIFVLIFRMAAKKATSGQPGALQNFVEVLVEFVDGSVKDSFHGRSPVIAPLALTIFVWVFLMNAVDLIPVDWIPQLAILITGDAHIPFRAVSTTDPNATLGMALSVFALIIFYSIKVKGIGGFIGELTLHPFGSKNIFVQALLIPVNFLLEFVTLIAKPISLALRLFGNMYAGELVFILIAVMFGSGLLWLSGLGVVLQWAWAVFHILIITLQAFIFMMLTIVYLSMAHEENH.

6 consecutive transmembrane segments (helical) span residues 43 to 63 (AFHL…VLIF), 104 to 124 (IAPL…VDLI), 160 to 180 (LSVF…GGFI), 193 to 213 (IFVQ…TLIA), 232 to 252 (VFIL…GLGV), and 259 to 279 (AVFH…LTIV).

The protein belongs to the ATPase A chain family. F-type ATPases have 2 components, CF(1) - the catalytic core - and CF(0) - the membrane proton channel. CF(1) has five subunits: alpha(3), beta(3), gamma(1), delta(1), epsilon(1). CF(0) has three main subunits: a(1), b(2) and c(9-12). The alpha and beta chains form an alternating ring which encloses part of the gamma chain. CF(1) is attached to CF(0) by a central stalk formed by the gamma and epsilon chains, while a peripheral stalk is formed by the delta and b chains.

The protein resides in the cell inner membrane. Functionally, key component of the proton channel; it plays a direct role in the translocation of protons across the membrane. This chain is ATP synthase subunit a, found in Pseudomonas fluorescens (strain SBW25).